A 190-amino-acid polypeptide reads, in one-letter code: Hypoxanthine/guanine phosphoribosyltransferase (190 aa).

It belongs to the purine/pyrimidine phosphoribosyltransferase family. Archaeal HPRT subfamily. Homodimer.

Its subcellular location is the cytoplasm. The enzyme catalyses IMP + diphosphate = hypoxanthine + 5-phospho-alpha-D-ribose 1-diphosphate. It catalyses the reaction GMP + diphosphate = guanine + 5-phospho-alpha-D-ribose 1-diphosphate. It participates in purine metabolism; IMP biosynthesis via salvage pathway; IMP from hypoxanthine: step 1/1. Catalyzes a salvage reaction resulting in the formation of IMP that is energically less costly than de novo synthesis. In Methanobacterium paludis (strain DSM 25820 / JCM 18151 / SWAN1), this protein is Hypoxanthine/guanine phosphoribosyltransferase.